Consider the following 128-residue polypeptide: Ribonuclease P protein component (128 aa).

It belongs to the RnpA family. As to quaternary structure, consists of a catalytic RNA component (M1 or rnpB) and a protein subunit.

The enzyme catalyses Endonucleolytic cleavage of RNA, removing 5'-extranucleotides from tRNA precursor.. RNaseP catalyzes the removal of the 5'-leader sequence from pre-tRNA to produce the mature 5'-terminus. It can also cleave other RNA substrates such as 4.5S RNA. The protein component plays an auxiliary but essential role in vivo by binding to the 5'-leader sequence and broadening the substrate specificity of the ribozyme. This Synechococcus sp. (strain CC9902) protein is Ribonuclease P protein component.